Reading from the N-terminus, the 401-residue chain is MAKRTKQPAQTGQDWSAPAAELLAELPADRDGLLAAAVAAVVEIDAAVMRGDGAAAELAGDRYEAIIWKLNGGTNFGCMADDEAAGRVIERHCAAVPGDVPLWGQRGQFLAVAGDVRALVEYEAGYGGPLNAHFQFHAVDLDRPFISATGYRSHFDTARGCMTVDEVARGILTAMLAEKKRPVLIEANYRDRLADAPLPDWLAGLVPPARREPATVTIPPGFVLVDVVLPAHKAFIARRWAAEAAGKVKAARAARSNAKGKAGGRERDPASAETAMRCSTAKADDCKAEAGPVSPEATMPGAGEASCSTARNGDAGPADLVEFTPAPGQRCEIVSVHHPVFAKEIGKRVIIVKVHPDTRQVWAHDDRPVTYKTNRAGRRVVDSDPSCIQSIYGFDQLRLIT.

Positions 253 to 311 (AARSNAKGKAGGRERDPASAETAMRCSTAKADDCKAEAGPVSPEATMPGAGEASCSTAR) are disordered.

The sequence is that of Protein KlcB (klcB) from Escherichia coli.